We begin with the raw amino-acid sequence, 339 residues long: Heat-inducible transcription repressor HrcA (339 aa).

The protein belongs to the HrcA family.

Negative regulator of class I heat shock genes (grpE-dnaK-dnaJ and groELS operons). Prevents heat-shock induction of these operons. The sequence is that of Heat-inducible transcription repressor HrcA from Paraburkholderia phytofirmans (strain DSM 17436 / LMG 22146 / PsJN) (Burkholderia phytofirmans).